The chain runs to 178 residues: 2-C-methyl-D-erythritol 2,4-cyclodiphosphate synthase (178 aa).

Residues D24, H26, and H61 each coordinate a divalent metal cation. 24-26 (DSH) provides a ligand contact to 4-CDP-2-C-methyl-D-erythritol 2-phosphate. 150 to 153 (TSGE) serves as a coordination point for 4-CDP-2-C-methyl-D-erythritol 2-phosphate.

The protein belongs to the IspF family. In terms of assembly, homotrimer. It depends on a divalent metal cation as a cofactor.

The catalysed reaction is 4-CDP-2-C-methyl-D-erythritol 2-phosphate = 2-C-methyl-D-erythritol 2,4-cyclic diphosphate + CMP. It participates in isoprenoid biosynthesis; isopentenyl diphosphate biosynthesis via DXP pathway; isopentenyl diphosphate from 1-deoxy-D-xylulose 5-phosphate: step 4/6. In terms of biological role, involved in the biosynthesis of isopentenyl diphosphate (IPP) and dimethylallyl diphosphate (DMAPP), two major building blocks of isoprenoid compounds. Catalyzes the conversion of 4-diphosphocytidyl-2-C-methyl-D-erythritol 2-phosphate (CDP-ME2P) to 2-C-methyl-D-erythritol 2,4-cyclodiphosphate (ME-CPP) with a corresponding release of cytidine 5-monophosphate (CMP). The polypeptide is 2-C-methyl-D-erythritol 2,4-cyclodiphosphate synthase (Chlamydia trachomatis serovar A (strain ATCC VR-571B / DSM 19440 / HAR-13)).